A 314-amino-acid polypeptide reads, in one-letter code: Mitochondrial RNA-splicing protein MRS3 (314 aa).

Solcar repeat units lie at residues 31-118, 128-210, and 217-310; these read APLY…CKKN, HHPF…STKF, and YNPL…AKHF. 6 helical membrane passes run 33–52, 93–112, 130–149, 185–204, 219–238, and 285–298; these read LYHQ…SVMF, GVQS…FGTY, PFKT…ALMN, SYPT…FVIY, PLIH…AITT, and GWKP…PATA.

Belongs to the mitochondrial carrier (TC 2.A.29) family.

Its subcellular location is the mitochondrion inner membrane. MRS3 suppresses a mitochondrial splice defect in the first intron of the COB gene. It may act as a carrier, exerting its suppressor activity via modulation of solute concentrations in the mitochondrion (possibly of cations). The polypeptide is Mitochondrial RNA-splicing protein MRS3 (MRS3) (Saccharomyces cerevisiae (strain ATCC 204508 / S288c) (Baker's yeast)).